The sequence spans 795 residues: Phenylalanine--tRNA ligase beta subunit (795 aa).

Residues 39 to 148 (AGVFDGVKVG…ENAPIGMDFR (110 aa)) form the tRNA-binding domain. The B5 domain occupies 401 to 476 (PKPNQVALRR…RIYGYNNIPN (76 aa)). 4 residues coordinate Mg(2+): Asp-454, Asp-460, Glu-463, and Glu-464. Residues 701 to 794 (SKFPANRRDI…VSAQFGAALR (94 aa)) enclose the FDX-ACB domain.

It belongs to the phenylalanyl-tRNA synthetase beta subunit family. Type 1 subfamily. Tetramer of two alpha and two beta subunits. Requires Mg(2+) as cofactor.

It is found in the cytoplasm. It catalyses the reaction tRNA(Phe) + L-phenylalanine + ATP = L-phenylalanyl-tRNA(Phe) + AMP + diphosphate + H(+). The chain is Phenylalanine--tRNA ligase beta subunit (pheT) from Vibrio cholerae serotype O1 (strain ATCC 39315 / El Tor Inaba N16961).